The sequence spans 255 residues: Hemin import ATP-binding protein HmuV (255 aa).

Residues 2–238 (LRAHNLHIRR…ESLKAVFGLE (237 aa)) form the ABC transporter domain. 34–41 (GPNGAGKS) contributes to the ATP binding site.

Belongs to the ABC transporter superfamily. Heme (hemin) importer (TC 3.A.1.14.5) family. As to quaternary structure, the complex is composed of two ATP-binding proteins (HmuV), two transmembrane proteins (HmuU) and a solute-binding protein (HmuT).

The protein resides in the cell inner membrane. Part of the ABC transporter complex HmuTUV involved in hemin import. Responsible for energy coupling to the transport system. In Pseudomonas fluorescens (strain Pf0-1), this protein is Hemin import ATP-binding protein HmuV.